Here is a 493-residue protein sequence, read N- to C-terminus: Probable cytosol aminopeptidase (493 aa).

Lys260 and Asp265 together coordinate Mn(2+). Lys272 is an active-site residue. Mn(2+)-binding residues include Asp284, Asp343, and Glu345. Arg347 is an active-site residue.

It belongs to the peptidase M17 family. It depends on Mn(2+) as a cofactor.

The protein localises to the cytoplasm. The enzyme catalyses Release of an N-terminal amino acid, Xaa-|-Yaa-, in which Xaa is preferably Leu, but may be other amino acids including Pro although not Arg or Lys, and Yaa may be Pro. Amino acid amides and methyl esters are also readily hydrolyzed, but rates on arylamides are exceedingly low.. The catalysed reaction is Release of an N-terminal amino acid, preferentially leucine, but not glutamic or aspartic acids.. In terms of biological role, presumably involved in the processing and regular turnover of intracellular proteins. Catalyzes the removal of unsubstituted N-terminal amino acids from various peptides. This is Probable cytosol aminopeptidase from Nostoc punctiforme (strain ATCC 29133 / PCC 73102).